Consider the following 194-residue polypeptide: Dephospho-CoA kinase (194 aa).

In terms of domain architecture, DPCK spans 4-194 (ALGLTGSIGM…HLVSKLTEGT (191 aa)). ATP is bound at residue 12–17 (GMGKST).

The protein belongs to the CoaE family.

It localises to the cytoplasm. It catalyses the reaction 3'-dephospho-CoA + ATP = ADP + CoA + H(+). It participates in cofactor biosynthesis; coenzyme A biosynthesis; CoA from (R)-pantothenate: step 5/5. Its function is as follows. Catalyzes the phosphorylation of the 3'-hydroxyl group of dephosphocoenzyme A to form coenzyme A. This Jannaschia sp. (strain CCS1) protein is Dephospho-CoA kinase.